The chain runs to 429 residues: MEVKKEQLEGNKVELKVEIEPERVDKALEQAYRKVVKNVSIPGFRKGKVPRRVLEARYGKEVLHRDAFDILVPPAYQEAVQAAEIEPIDRPEITDFYIEENKPATFSAVVEVKPEVELGEYKGLGIEKDEVEVTEEDIEAQLKSLQEQHSQLKSTDKEVVEEGDFVVIDFVGTIDGEEFQGGSAEEYNLEVGSGTFIPGFEEQLVGKKVGEETEVEVTFPEDYQAEDLAGKDAVFKVDIKEIKVKETPELDDEFAKEASEFDTLEELKDDIKERLTSQKEDRARRKLEDEIVDRVTENAEVDVPETLVNNELDMMYQNLAYSISSYGMKVEDYLKSMGLDEESWREENREEAEKRAKSNLVLEAIGKKEGIEVTDEEIDNKIEEIAKDGEQKPEQIKAYLQLQGQLEGLKHTIFVRKVIDFLVEHNQND.

Residues glycine 163–proline 248 enclose the PPIase FKBP-type domain.

It belongs to the FKBP-type PPIase family. Tig subfamily.

It localises to the cytoplasm. It carries out the reaction [protein]-peptidylproline (omega=180) = [protein]-peptidylproline (omega=0). Functionally, involved in protein export. Acts as a chaperone by maintaining the newly synthesized protein in an open conformation. Functions as a peptidyl-prolyl cis-trans isomerase. In Halothermothrix orenii (strain H 168 / OCM 544 / DSM 9562), this protein is Trigger factor.